Here is a 156-residue protein sequence, read N- to C-terminus: 6,7-dimethyl-8-ribityllumazine synthase (156 aa).

Residues phenylalanine 22, 57–59 (AYE), and 81–83 (TVI) each bind 5-amino-6-(D-ribitylamino)uracil. Residue 86 to 87 (GT) participates in (2S)-2-hydroxy-3-oxobutyl phosphate binding. Histidine 89 functions as the Proton donor in the catalytic mechanism. Phenylalanine 114 serves as a coordination point for 5-amino-6-(D-ribitylamino)uracil. Arginine 128 provides a ligand contact to (2S)-2-hydroxy-3-oxobutyl phosphate.

The protein belongs to the DMRL synthase family. As to quaternary structure, forms an icosahedral capsid composed of 60 subunits, arranged as a dodecamer of pentamers.

The catalysed reaction is (2S)-2-hydroxy-3-oxobutyl phosphate + 5-amino-6-(D-ribitylamino)uracil = 6,7-dimethyl-8-(1-D-ribityl)lumazine + phosphate + 2 H2O + H(+). It participates in cofactor biosynthesis; riboflavin biosynthesis; riboflavin from 2-hydroxy-3-oxobutyl phosphate and 5-amino-6-(D-ribitylamino)uracil: step 1/2. Catalyzes the formation of 6,7-dimethyl-8-ribityllumazine by condensation of 5-amino-6-(D-ribitylamino)uracil with 3,4-dihydroxy-2-butanone 4-phosphate. This is the penultimate step in the biosynthesis of riboflavin. This chain is 6,7-dimethyl-8-ribityllumazine synthase, found in Mannheimia succiniciproducens (strain KCTC 0769BP / MBEL55E).